A 375-amino-acid polypeptide reads, in one-letter code: Succinyl-diaminopimelate desuccinylase (375 aa).

A Zn(2+)-binding site is contributed by histidine 66. Aspartate 68 is a catalytic residue. Aspartate 99 lines the Zn(2+) pocket. The active-site Proton acceptor is the glutamate 133. Zn(2+) contacts are provided by glutamate 134, glutamate 162, and histidine 348.

It belongs to the peptidase M20A family. DapE subfamily. In terms of assembly, homodimer. Requires Zn(2+) as cofactor. Co(2+) is required as a cofactor.

The catalysed reaction is N-succinyl-(2S,6S)-2,6-diaminopimelate + H2O = (2S,6S)-2,6-diaminopimelate + succinate. It functions in the pathway amino-acid biosynthesis; L-lysine biosynthesis via DAP pathway; LL-2,6-diaminopimelate from (S)-tetrahydrodipicolinate (succinylase route): step 3/3. Catalyzes the hydrolysis of N-succinyl-L,L-diaminopimelic acid (SDAP), forming succinate and LL-2,6-diaminopimelate (DAP), an intermediate involved in the bacterial biosynthesis of lysine and meso-diaminopimelic acid, an essential component of bacterial cell walls. This chain is Succinyl-diaminopimelate desuccinylase, found in Escherichia coli O17:K52:H18 (strain UMN026 / ExPEC).